Consider the following 1663-residue polypeptide: Cortactin-binding protein 2 (1663 aa).

Disordered regions lie at residues 1-23 (MATD…AGAA), 203-222 (KKKT…RSTE), 367-440 (GASV…LHPG), 454-478 (GNAN…SPTS), and 498-616 (RFTS…PKPS). Residues 119-276 (KKMQERMSAQ…EQLKRGSDSK (158 aa)) adopt a coiled-coil conformation. The span at 386 to 396 (PSTGSTPDPTS) shows a compositional bias: low complexity. Residue Arg498 is modified to Asymmetric dimethylarginine. Residues 583–593 (TVASTPSSLPQ) are compositionally biased toward polar residues. ANK repeat units lie at residues 709–739 (GRPT…DINY), 743–772 (DGHS…QVNA), 776–805 (NGFT…NINH), 809–838 (GGQT…NRSV), 842–871 (DGWT…PAHG), and 912–942 (EGWT…EPER). The interval 1449-1482 (KGESGAWRKVNTSPRRKSGRFSLPTWNKPDLSTE) is disordered. The residue at position 1524 (Ser1524) is a Phosphoserine. The segment at 1581-1663 (QKEVSPLSSH…KNEHLEKPNK (83 aa)) is disordered. Residues 1582-1599 (KEVSPLSSHQTTECSNSK) are compositionally biased toward polar residues. Low complexity predominate over residues 1624–1638 (SQNTKRSSSSSNTRQ). The segment covering 1639-1648 (IEINNNSKEV) has biased composition (polar residues). A compositionally biased stretch (basic and acidic residues) spans 1653-1663 (HKNEHLEKPNK).

In terms of assembly, interacts with CTTN/cortactin SH3 domain. Interacts with STRN, STRN4/zinedin and MOB4/phocein; this interactions mediate the association with the STRIPAK core complex and may regulate dendritic spine distribution of the STRIPAK complex in hippocampal neurons. Activation of glutamate receptors weakens the interaction with STRN and STRN4. Highest expression in brain. Also expressed in kidney, pancreas, lung, heart, liver, skeletal muscle and placenta.

Its subcellular location is the cytoplasm. It localises to the cell cortex. It is found in the cell projection. The protein resides in the dendritic spine. Regulates the dendritic spine distribution of CTTN/cortactin in hippocampal neurons, and thus controls dendritic spinogenesis and dendritic spine maintenance. Associates with the striatin-interacting phosphatase and kinase (STRIPAK) core complex to regulate dendritic spine distribution of the STRIPAK complex in hippocampal neurons. This is Cortactin-binding protein 2 from Homo sapiens (Human).